We begin with the raw amino-acid sequence, 395 residues long: Lipid-A-disaccharide synthase (395 aa).

Belongs to the LpxB family.

It carries out the reaction a lipid X + a UDP-2-N,3-O-bis[(3R)-3-hydroxyacyl]-alpha-D-glucosamine = a lipid A disaccharide + UDP + H(+). It functions in the pathway bacterial outer membrane biogenesis; LPS lipid A biosynthesis. Functionally, condensation of UDP-2,3-diacylglucosamine and 2,3-diacylglucosamine-1-phosphate to form lipid A disaccharide, a precursor of lipid A, a phosphorylated glycolipid that anchors the lipopolysaccharide to the outer membrane of the cell. This chain is Lipid-A-disaccharide synthase, found in Bordetella avium (strain 197N).